The chain runs to 886 residues: MDKNFYKNSLNIFNSNFSMKANLSEKDKFYADFWEKNQIYQQILRKRRGNPRFILHDGPPYANGDIHIGHALNKILKDIIVRYKTMAGFYSPFVPGWDTHGLPIENKIINQIGSKSTLEIRRKSNDFANSQILAQMKQFKKLNLLTDFKQIYQTNTPNYEAKQLKLFKKMVSRGLVYRALKPVYWSPSSQSALAEAEIEYLEYRSPSLFTSFDIKKGNNFVAENDKLIIWTTTPWTLIANSGVAVGENFDYVRIKNGENFYVLAANLLEKLAVIFDWKHYEIIDNFPGKSILGIKYLHPIFEKICPIVSGNHVSLDVGSGLVHLAPLFGEDDYWIGRENNLEMVMHVNDDGKFNENAGQFSGQFYADSNKLITEFLEKKSKILHLSFIDHSFPHDWRTLKPVIYRGTPQWFVSIEKIKKDLEKAIEEIEFPENWLKKRLTKMVVERKDWLISRQRSWGIPLIIFYDQNKEPVLDKPEIFDYIISLVEKFGSRIWYEKTTDELLPEKYQNLGWTKENDILDVWFDSGVSFFAANISDEKPPFDIYFEGSDQYRGWFNSSLINSVIYFGFSPYKKLLSHGFVVDAKGNKMSKSRGNGVDPLVILSKYGCDIFRLWVANSEYYNDIVYSEAIFEQNVEIYRKIRNTVRFLITNLADFKPKKYELTEVDLYIFNKIQKLKNEIIQNYDQNRFVRVVKIINNFIIEFSNFYLSIVKDILYADKEESLKRRQVQYNLYELLQVLNIAIAPIMPTTAEEIYSFIQKNNKQISVHMEEFFKKSHFDEELDAKWDEFFQIKDSVYQLIEQKIKSKEIKRPNEVGVLLKTDSDFIKSIDLEKLLMVAKVEFSNEKTEILQLNWEKCPRCWNHFEKINKVCARCFEVLNEIVPEKNS.

The 'HIGH' region motif lies at 60–70; sequence PYANGDIHIGH. Glu-546 lines the L-isoleucyl-5'-AMP pocket. Residues 587–591 carry the 'KMSKS' region motif; sequence KMSKS. ATP is bound at residue Lys-590. Zn(2+)-binding residues include Cys-856, Cys-859, Cys-870, and Cys-873.

This sequence belongs to the class-I aminoacyl-tRNA synthetase family. IleS type 1 subfamily. Monomer. It depends on Zn(2+) as a cofactor.

It is found in the cytoplasm. It carries out the reaction tRNA(Ile) + L-isoleucine + ATP = L-isoleucyl-tRNA(Ile) + AMP + diphosphate. Catalyzes the attachment of isoleucine to tRNA(Ile). As IleRS can inadvertently accommodate and process structurally similar amino acids such as valine, to avoid such errors it has two additional distinct tRNA(Ile)-dependent editing activities. One activity is designated as 'pretransfer' editing and involves the hydrolysis of activated Val-AMP. The other activity is designated 'posttransfer' editing and involves deacylation of mischarged Val-tRNA(Ile). This Mesomycoplasma hyopneumoniae (strain 232) (Mycoplasma hyopneumoniae) protein is Isoleucine--tRNA ligase.